The following is a 212-amino-acid chain: Actin-depolymerizing factor 1, isoforms a/b (212 aa).

The 157-residue stretch at 3-159 folds into the ADF-H domain; the sequence is SGVMVDPDVQ…SHKELLNNCP (157 aa).

It belongs to the actin-binding proteins ADF family. As to quaternary structure, interacts with F-actin.

Its function is as follows. Depolymerizes growing actin filaments in muscle cells; required for the assembly of actin filaments into the functional contractile myofilament lattice of muscle. Competes with unc-87 for actin binding and inhibits the actin-bundling activity of unc-87. The sequence is that of Actin-depolymerizing factor 1, isoforms a/b from Caenorhabditis elegans.